Here is a 406-residue protein sequence, read N- to C-terminus: Tyrosine--tRNA ligase (406 aa).

Position 35 (Y35) interacts with L-tyrosine. Positions 40-49 (PTADSLHVGH) match the 'HIGH' region motif. Y168 and Q172 together coordinate L-tyrosine. The 'KMSKS' region signature appears at 228-232 (KMGKT). ATP is bound at residue K231. The S4 RNA-binding domain occupies 340 to 404 (LPILDVMAST…RGKKNYNKIE (65 aa)).

It belongs to the class-I aminoacyl-tRNA synthetase family. TyrS type 1 subfamily. As to quaternary structure, homodimer.

Its subcellular location is the cytoplasm. The catalysed reaction is tRNA(Tyr) + L-tyrosine + ATP = L-tyrosyl-tRNA(Tyr) + AMP + diphosphate + H(+). Its function is as follows. Catalyzes the attachment of tyrosine to tRNA(Tyr) in a two-step reaction: tyrosine is first activated by ATP to form Tyr-AMP and then transferred to the acceptor end of tRNA(Tyr). The polypeptide is Tyrosine--tRNA ligase (Clostridium beijerinckii (strain ATCC 51743 / NCIMB 8052) (Clostridium acetobutylicum)).